A 469-amino-acid chain; its full sequence is Probable glucuronoxylan glucuronosyltransferase F8H (469 aa).

Residues 1-36 (MSLDIKKPNITKTKKKKTGFVVKMQLNNNRGGNKRN) are Cytoplasmic-facing. A helical; Signal-anchor for type II membrane protein transmembrane segment spans residues 37–57 (IFIFFFFRNYYTWILWFCLSL). Residues 58 to 469 (YFFTSYFSVE…RVLSQREVDM (412 aa)) lie on the Lumenal side of the membrane. 4 N-linked (GlcNAc...) asparagine glycosylation sites follow: asparagine 171, asparagine 203, asparagine 301, and asparagine 411.

This sequence belongs to the glycosyltransferase 47 family. As to expression, expressed in xylem cells in stems and in roots.

Its subcellular location is the golgi apparatus membrane. Its function is as follows. Involved in the synthesis of the hemicellulose glucuronoxylan, a major component of secondary cell walls. Probably involved in the synthesis of the glycosyl sequence at the glucuronoxylan reducing end. The sequence is that of Probable glucuronoxylan glucuronosyltransferase F8H (F8H) from Arabidopsis thaliana (Mouse-ear cress).